The following is a 650-amino-acid chain: FAS-associated factor 1 (650 aa).

The UBA domain maps to 1–57 (MASNMDREMILADFQACTGIENIDEAITLLEQNNWDLVAAINGVIPQENGILQSEYG). Residues 62–87 (PGPAFNPASHPASAPTSSSSSAFRPV) are disordered. Low complexity predominate over residues 68 to 83 (PASHPASAPTSSSSSA). S320 carries the phosphoserine modification. The 78-residue stretch at 569–646 (NAEPVSKLRI…KLFPQETLFL (78 aa)) folds into the UBX domain. A Phosphothreonine modification is found at T580. Phosphoserine is present on S582.

Interacts with CDT1 and ATPase VCP/p97. Interacts (via UBA domain) with FAS (via death domain). Interacts (via UBA domain) with NLRP12 (via DAPIN/PYRIN domain). In terms of tissue distribution, most abundant in testis, slightly less abundant in skeletal muscle and heart, followed by prostate, thymus, ovary, small intestine, and colon. Not detected in the peripheral blood leukocytes.

It is found in the nucleus. In terms of biological role, ubiquitin-binding protein. Required for the progression of DNA replication forks by targeting DNA replication licensing factor CDT1 for degradation. Potentiates but cannot initiate FAS-induced apoptosis. This is FAS-associated factor 1 (FAF1) from Homo sapiens (Human).